The chain runs to 208 residues: Small ribosomal subunit protein uS4 (208 aa).

Residues R98–A158 form the S4 RNA-binding domain.

It belongs to the universal ribosomal protein uS4 family. Part of the 30S ribosomal subunit. Contacts protein S5. The interaction surface between S4 and S5 is involved in control of translational fidelity.

One of the primary rRNA binding proteins, it binds directly to 16S rRNA where it nucleates assembly of the body of the 30S subunit. In terms of biological role, with S5 and S12 plays an important role in translational accuracy. This chain is Small ribosomal subunit protein uS4, found in Lawsonia intracellularis (strain PHE/MN1-00).